Consider the following 115-residue polypeptide: T cell receptor beta variable 7-2 (115 aa).

An N-terminal signal peptide occupies residues 1 to 21; that stretch reads MGTRLLFWVAFCLLGADHTGA. An Ig-like domain is found at 22-115; the sequence is GVSQSPSNKV…SAVYLCASSL (94 aa). The cysteines at positions 42 and 111 are disulfide-linked.

In terms of assembly, alpha-beta TR is a heterodimer composed of an alpha and beta chain; disulfide-linked. The alpha-beta TR is associated with the transmembrane signaling CD3 coreceptor proteins to form the TR-CD3 (TcR or TCR). The assembly of alpha-beta TR heterodimers with CD3 occurs in the endoplasmic reticulum where a single alpha-beta TR heterodimer associates with one CD3D-CD3E heterodimer, one CD3G-CD3E heterodimer and one CD247 homodimer forming a stable octameric structure. CD3D-CD3E and CD3G-CD3E heterodimers preferentially associate with TR alpha and TR beta chains, respectively. The association of the CD247 homodimer is the last step of TcR assembly in the endoplasmic reticulum and is required for transport to the cell surface.

It localises to the cell membrane. Functionally, v region of the variable domain of T cell receptor (TR) beta chain that participates in the antigen recognition. Alpha-beta T cell receptors are antigen specific receptors which are essential to the immune response and are present on the cell surface of T lymphocytes. Recognize peptide-major histocompatibility (MH) (pMH) complexes that are displayed by antigen presenting cells (APC), a prerequisite for efficient T cell adaptive immunity against pathogens. Binding of alpha-beta TR to pMH complex initiates TR-CD3 clustering on the cell surface and intracellular activation of LCK that phosphorylates the ITAM motifs of CD3G, CD3D, CD3E and CD247 enabling the recruitment of ZAP70. In turn ZAP70 phosphorylates LAT, which recruits numerous signaling molecules to form the LAT signalosome. The LAT signalosome propagates signal branching to three major signaling pathways, the calcium, the mitogen-activated protein kinase (MAPK) kinase and the nuclear factor NF-kappa-B (NF-kB) pathways, leading to the mobilization of transcription factors that are critical for gene expression and essential for T cell growth and differentiation. The T cell repertoire is generated in the thymus, by V-(D)-J rearrangement. This repertoire is then shaped by intrathymic selection events to generate a peripheral T cell pool of self-MH restricted, non-autoaggressive T cells. Post-thymic interaction of alpha-beta TR with the pMH complexes shapes TR structural and functional avidity. The sequence is that of T cell receptor beta variable 7-2 from Homo sapiens (Human).